The following is a 261-amino-acid chain: Methyltransferase nsrG (261 aa).

Positions D49 to F141 are methyltransferase domain.

The protein belongs to the methyltransferase superfamily.

It participates in secondary metabolite biosynthesis. Its function is as follows. Methyltransferase; part of the gene cluster that mediates the biosynthesis of the tetrahydroxanthone dimer neosartorin, which exhibits antibacterial activity. The two different monomeric units appear to be synthesized by the same set of enzymes, among which the Baeyer-Villiger monooxygenase nsrF is the key enzyme for the divergence of the biosynthetic routes. The pathway begins with the synthesis of atrochrysone thioester by the polyketide synthase nsrB. The atrochrysone carboxyl ACP thioesterase nsrC then breaks the thioester bond and releases the atrochrysone carboxylic acid from AacuL. Atrochrysone carboxylic acid is decarboxylated by the decarboxylase nsrE, and oxidized by the anthrone oxygenase nsrD to yield emodin. Emodin is then reduced to emodin hydroquinone by the oxidoreductase nsrR. A-ring reduction by the short chain dehydrogenase nsrJ, dehydration by the scytalone dehydratase-like protein nsrI and probable spontaneous re-oxidation, results in overall deoxygenation to chrysophanol. The Baeyer-Villiger monooxygenase nsrF accepts chrysophanol as a substrate to insert one oxygen atom at two different positions to yield the precursors of both monomric units. NsrF is promiscuous/flexible in interacting with the 2 (non methylated and methylated) aromatic rings of chrysophanol, thus diverging the biosynthetic pathway at this point. After the hydrolysis of the lactones, methylesterification by the methyltransferase nsrG yields respectively moniliphenone and 2,2',6'-trihydroxy-4-methyl-6-methoxya-cyldiphenylmethanone. The next steps are the hydroxylation by the FAD-dependent monooxygenase nsrK, followed by isomerization by the monooxygenase nsrQ. The short chain dehydrogenase/reductase nsrO then catalyzes the C-5 ketoreduction to give the xanthone skeleton of blennolide C and 5-acetylblennolide A. The acetyltransferase nsrL has a strict substrate specificity and uses only blennolide A but not blennolide C to yield 5-acetylblennolide A as the single-acetylated product. In the final step of the biosynthesis, the heterodimerization of the 2 xanthones, blennolide C and 5-acetylblennolide A, is catalyzed by the cytochrome P450 monooxygenase nsrP. NsrP can utilize at least three different xanthones as its substrates to perform the dimerization reaction. This is Methyltransferase nsrG from Aspergillus novofumigatus (strain IBT 16806).